A 236-amino-acid chain; its full sequence is Venom metalloproteinase antarease-like TfasMP_A (236 aa).

The 229-residue stretch at 4–232 (IVVEYYIVTD…KPAASCIFEQ (229 aa)) folds into the Peptidase M12B domain. A Zn(2+)-binding site is contributed by His161. Glu162 is an active-site residue. Residues His165 and His171 each coordinate Zn(2+).

This sequence belongs to the venom metalloproteinase (M12B) family. It depends on Zn(2+) as a cofactor. Post-translationally, contains several disulfide bonds. As to expression, expressed by the venom gland.

The protein localises to the secreted. With respect to regulation, inhibited by EDTA. Its function is as follows. Acts as a metalloprotease. Penetrates intact tissue and specifically cleaves the vesicle-associated membrane protein 2 (VAMP2) (part of the SNARE complex) involved in pancreatic secretion, thus disrupting the normal vesicular traffic. The polypeptide is Venom metalloproteinase antarease-like TfasMP_A (Tityus fasciolatus (Central Brazilian scorpion)).